Reading from the N-terminus, the 126-residue chain is MFYTILCVGTGGFVGAILRFLFYFGFAQFFSQKYIFIATICVNIIGSFIIGFVLNIATTYAINYNFKNFLVTGLLGALTTFSTFTYENAVFLNHGEISKFFLNITMSIILCLIFCFLGIYTAKIIH.

4 helical membrane passes run 5 to 25 (ILCV…FYFG), 34 to 54 (YIFI…GFVL), 71 to 91 (VTGL…NAVF), and 100 to 120 (FFLN…LGIY). Glycine 76 and threonine 79 together coordinate Na(+).

Belongs to the fluoride channel Fluc/FEX (TC 1.A.43) family.

Its subcellular location is the cell inner membrane. It catalyses the reaction fluoride(in) = fluoride(out). With respect to regulation, na(+) is not transported, but it plays an essential structural role and its presence is essential for fluoride channel function. Its function is as follows. Fluoride-specific ion channel. Important for reducing fluoride concentration in the cell, thus reducing its toxicity. This is Fluoride-specific ion channel FluC from Campylobacter hominis (strain ATCC BAA-381 / DSM 21671 / CCUG 45161 / LMG 19568 / NCTC 13146 / CH001A).